The following is a 426-amino-acid chain: Serine--tRNA ligase (426 aa).

Residue 233–235 (TAE) participates in L-serine binding. 264 to 266 (RSE) contacts ATP. E287 provides a ligand contact to L-serine. Residue 351 to 354 (EISS) participates in ATP binding. L-serine is bound at residue S387.

It belongs to the class-II aminoacyl-tRNA synthetase family. Type-1 seryl-tRNA synthetase subfamily. In terms of assembly, homodimer. The tRNA molecule binds across the dimer.

It localises to the cytoplasm. It carries out the reaction tRNA(Ser) + L-serine + ATP = L-seryl-tRNA(Ser) + AMP + diphosphate + H(+). The enzyme catalyses tRNA(Sec) + L-serine + ATP = L-seryl-tRNA(Sec) + AMP + diphosphate + H(+). The protein operates within aminoacyl-tRNA biosynthesis; selenocysteinyl-tRNA(Sec) biosynthesis; L-seryl-tRNA(Sec) from L-serine and tRNA(Sec): step 1/1. Its function is as follows. Catalyzes the attachment of serine to tRNA(Ser). Is also able to aminoacylate tRNA(Sec) with serine, to form the misacylated tRNA L-seryl-tRNA(Sec), which will be further converted into selenocysteinyl-tRNA(Sec). This is Serine--tRNA ligase from Clostridium botulinum (strain Loch Maree / Type A3).